Consider the following 285-residue polypeptide: Bifunctional protein FolD (285 aa).

NADP(+)-binding positions include glycine 165–serine 167, serine 190, and isoleucine 231.

It belongs to the tetrahydrofolate dehydrogenase/cyclohydrolase family. As to quaternary structure, homodimer.

The enzyme catalyses (6R)-5,10-methylene-5,6,7,8-tetrahydrofolate + NADP(+) = (6R)-5,10-methenyltetrahydrofolate + NADPH. It catalyses the reaction (6R)-5,10-methenyltetrahydrofolate + H2O = (6R)-10-formyltetrahydrofolate + H(+). The protein operates within one-carbon metabolism; tetrahydrofolate interconversion. Its function is as follows. Catalyzes the oxidation of 5,10-methylenetetrahydrofolate to 5,10-methenyltetrahydrofolate and then the hydrolysis of 5,10-methenyltetrahydrofolate to 10-formyltetrahydrofolate. The chain is Bifunctional protein FolD from Alkaliphilus oremlandii (strain OhILAs) (Clostridium oremlandii (strain OhILAs)).